The chain runs to 484 residues: UDP-N-acetylmuramate--L-alanine ligase (484 aa).

128–134 is a binding site for ATP; it reads GTHGKTT.

It belongs to the MurCDEF family.

Its subcellular location is the cytoplasm. The catalysed reaction is UDP-N-acetyl-alpha-D-muramate + L-alanine + ATP = UDP-N-acetyl-alpha-D-muramoyl-L-alanine + ADP + phosphate + H(+). It functions in the pathway cell wall biogenesis; peptidoglycan biosynthesis. In terms of biological role, cell wall formation. The polypeptide is UDP-N-acetylmuramate--L-alanine ligase (Shewanella loihica (strain ATCC BAA-1088 / PV-4)).